A 256-amino-acid polypeptide reads, in one-letter code: Protein FixA (256 aa).

It belongs to the ETF beta-subunit/FixA family. Heterodimer of FixA and FixB.

Its pathway is amine and polyamine metabolism; carnitine metabolism. In terms of biological role, required for anaerobic carnitine reduction. May bring reductant to CaiA. This is Protein FixA from Escherichia coli O7:K1 (strain IAI39 / ExPEC).